We begin with the raw amino-acid sequence, 153 residues long: Myosin regulatory light chain (153 aa).

A1 bears the Blocked amino end (Ala) mark. 2 consecutive EF-hand domains span residues 15–50 (KQIQ…LGRT) and 81–116 (DSEE…MGNN). 4 residues coordinate Ca(2+): D28, D30, D32, and D39.

In molluscan muscle, calcium regulation is associated with myosin rather than with actin. Muscle myosin contains two types of light chains: the catalytic light chain, essential for ATPase activity, and the regulatory light chain, a calcium-binding protein responsible for Ca(2+) dependent binding and Ca(2+) dependent Mg-ATPase activity. This chain is Myosin regulatory light chain, found in Patinopecten sp. (Scallop).